The sequence spans 562 residues: Protein wntless (562 aa).

The Cytoplasmic portion of the chain corresponds to 1–13 (MSGTILENLSGRK). A helical transmembrane segment spans residues 14-34 (LSILVSSLMLCQVACFLMGGL). Over 35-239 (YAPVPAGHQT…AIHQNGGFTQ (205 aa)) the chain is Lumenal. 2 N-linked (GlcNAc...) asparagine glycosylation sites follow: Asn-58 and Asn-103. Residues 240 to 260 (VWLLLKTLLFPFVVGIMIWFW) form a helical membrane-spanning segment. Residues 261 to 270 (RRVHILQRSP) lie on the Cytoplasmic side of the membrane. Residues 271–291 (ALLEYMLLYLGGALSFLNLPL) traverse the membrane as a helical segment. The Lumenal segment spans residues 292-311 (EYLTLSIEMPYMLLLSDVRQ). Residues 312-332 (GIFYAMLLSFWLVFAGEHMLI) form a helical membrane-spanning segment. Residues 333 to 344 (QDTPNKSTIRSR) are Cytoplasmic-facing. A helical membrane pass occupies residues 345 to 365 (YWKHLSAVVVGCISLFVFDIC). Over 366–390 (ERGVQLRNPFYSIWTTPLGAKVAMS) the chain is Lumenal. Residues 391 to 411 (FIVLAGVSAAIYFLFLCFMVW) traverse the membrane as a helical segment. The Cytoplasmic portion of the chain corresponds to 412-441 (KVFKDIGDKRTSLPSMSQARRLHYEGLIYR). A helical membrane pass occupies residues 442-462 (FKFLMLATLLCAGLTVAGFIM). Residues 463-482 (GQMAEGHWKWNEDIEIQLTS) lie on the Lumenal side of the membrane. Residues 483 to 503 (AFLTGVYGMWNIYIFALIILY) form a helical membrane-spanning segment. Residues 504 to 562 (APSHKQWPTMRHSDETTQSNENIVASAASEEIEFSNLPSDSNPSEISSLTSFTRKVAFD) lie on the Cytoplasmic side of the membrane.

It belongs to the wntless family. In terms of assembly, interacts with wg; in the Golgi. Interacts with Vps35, a component of the retromer complex; wls stability is regulated by Vps35.

It localises to the presynaptic cell membrane. The protein resides in the postsynaptic cell membrane. The protein localises to the cell membrane. It is found in the endoplasmic reticulum membrane. Its subcellular location is the endosome membrane. It localises to the golgi apparatus membrane. Functionally, a segment polarity gene required for wingless (wg)-dependent patterning processes, acting in both wg-sending cells and wg-target cells. In non-neuronal cells wls directs wg secretion. The wls traffic loop encompasses the Golgi, the cell surface, an endocytic compartment and a retrograde route leading back to the Golgi, and involves clathrin-mediated endocytosis and the retromer complex (a conserved protein complex consisting of Vps35 and Vps26). In neuronal cells (the larval motorneuron NMJ), the wg signal moves across the synapse via the release of wls-containing exosome-like vesicles. Postsynaptic wls is required for the trafficking of fz2 through the fz2-interacting protein Grip. The protein is Protein wntless of Drosophila virilis (Fruit fly).